The chain runs to 343 residues: Dihydroorotate dehydrogenase (quinone) (343 aa).

FMN-binding positions include 61 to 65 (AGLDK) and Thr-85. Lys-65 is a substrate binding site. 110–114 (NRMGF) provides a ligand contact to substrate. FMN is bound by residues Asn-138 and Asn-171. Asn-171 provides a ligand contact to substrate. The Nucleophile role is filled by Ser-174. Residue Asn-176 participates in substrate binding. FMN-binding residues include Lys-216 and Thr-244. Substrate is bound at residue 245–246 (NT). Residues Gly-267, Gly-296, and 317–318 (YS) each bind FMN.

Belongs to the dihydroorotate dehydrogenase family. Type 2 subfamily. Monomer. FMN serves as cofactor.

The protein resides in the cell membrane. It catalyses the reaction (S)-dihydroorotate + a quinone = orotate + a quinol. The protein operates within pyrimidine metabolism; UMP biosynthesis via de novo pathway; orotate from (S)-dihydroorotate (quinone route): step 1/1. Functionally, catalyzes the conversion of dihydroorotate to orotate with quinone as electron acceptor. This is Dihydroorotate dehydrogenase (quinone) from Pseudomonas syringae pv. syringae (strain B728a).